We begin with the raw amino-acid sequence, 511 residues long: Histidine ammonia-lyase 2 (511 aa).

A cross-link (5-imidazolinone (Ser-Gly)) is located at residues 144-146; that stretch reads SSG. Residue serine 145 is modified to 2,3-didehydroalanine (Ser).

It belongs to the PAL/histidase family. Contains an active site 4-methylidene-imidazol-5-one (MIO), which is formed autocatalytically by cyclization and dehydration of residues Ser-Ser-Gly.

It is found in the cytoplasm. It carries out the reaction L-histidine = trans-urocanate + NH4(+). Its pathway is amino-acid degradation; L-histidine degradation into L-glutamate; N-formimidoyl-L-glutamate from L-histidine: step 1/3. This chain is Histidine ammonia-lyase 2 (hutH2), found in Fusobacterium nucleatum subsp. nucleatum (strain ATCC 25586 / DSM 15643 / BCRC 10681 / CIP 101130 / JCM 8532 / KCTC 2640 / LMG 13131 / VPI 4355).